A 678-amino-acid chain; its full sequence is UvrABC system protein B (678 aa).

A Helicase ATP-binding domain is found at 31–417 (ENLNDGLAHQ…KSGTEIIDQV (387 aa)). 44 to 51 (GVTGSGKT) is a binding site for ATP. The short motif at 97-120 (YYDYYQPEAYVPSSDTFIEKDASI) is the Beta-hairpin element. The Helicase C-terminal domain occupies 436–602 (QVDDLLSEAR…GLNKKVGELL (167 aa)). The tract at residues 603 to 625 (DIGQGGSNKSRNKPRSQKAAEPA) is disordered. The 36-residue stretch at 638–673 (QQQIKKLEQQMYKFAQDLEFEKAAAIRDQLHKLREQ) folds into the UVR domain.

The protein belongs to the UvrB family. As to quaternary structure, forms a heterotetramer with UvrA during the search for lesions. Interacts with UvrC in an incision complex.

Its subcellular location is the cytoplasm. The UvrABC repair system catalyzes the recognition and processing of DNA lesions. A damage recognition complex composed of 2 UvrA and 2 UvrB subunits scans DNA for abnormalities. Upon binding of the UvrA(2)B(2) complex to a putative damaged site, the DNA wraps around one UvrB monomer. DNA wrap is dependent on ATP binding by UvrB and probably causes local melting of the DNA helix, facilitating insertion of UvrB beta-hairpin between the DNA strands. Then UvrB probes one DNA strand for the presence of a lesion. If a lesion is found the UvrA subunits dissociate and the UvrB-DNA preincision complex is formed. This complex is subsequently bound by UvrC and the second UvrB is released. If no lesion is found, the DNA wraps around the other UvrB subunit that will check the other stand for damage. In Mannheimia succiniciproducens (strain KCTC 0769BP / MBEL55E), this protein is UvrABC system protein B.